Consider the following 447-residue polypeptide: Tubulin beta chain (447 aa).

8 residues coordinate GTP: Q11, E69, S138, G142, T143, G144, N204, and N226. Residue E69 participates in Mg(2+) binding. The segment at Q424–E447 is disordered. Residues D432–E447 show a composition bias toward acidic residues.

This sequence belongs to the tubulin family. As to quaternary structure, dimer of alpha and beta chains. A typical microtubule is a hollow water-filled tube with an outer diameter of 25 nm and an inner diameter of 15 nM. Alpha-beta heterodimers associate head-to-tail to form protofilaments running lengthwise along the microtubule wall with the beta-tubulin subunit facing the microtubule plus end conferring a structural polarity. Microtubules usually have 13 protofilaments but different protofilament numbers can be found in some organisms and specialized cells. Mg(2+) is required as a cofactor.

It localises to the cytoplasm. The protein resides in the cytoskeleton. Functionally, tubulin is the major constituent of microtubules, a cylinder consisting of laterally associated linear protofilaments composed of alpha- and beta-tubulin heterodimers. Microtubules grow by the addition of GTP-tubulin dimers to the microtubule end, where a stabilizing cap forms. Below the cap, tubulin dimers are in GDP-bound state, owing to GTPase activity of alpha-tubulin. This chain is Tubulin beta chain (TUB1), found in Zymoseptoria tritici (Speckled leaf blotch fungus).